The primary structure comprises 119 residues: MSQIDKAARRQKIKARSRATVHGNATRPRLCVYRSLSQIYAQLIDDESGKTLMAVSTMSKDNAGLQGSKSERSAAVGKQLAEKAIAQGISNVVFDRNGFRYHGRIKALADGAREAGLIF.

Positions 1–20 (MSQIDKAARRQKIKARSRAT) are disordered. Positions 9-19 (RRQKIKARSRA) are enriched in basic residues.

The protein belongs to the universal ribosomal protein uL18 family. As to quaternary structure, part of the 50S ribosomal subunit; part of the 5S rRNA/L5/L18/L25 subcomplex. Contacts the 5S and 23S rRNAs.

In terms of biological role, this is one of the proteins that bind and probably mediate the attachment of the 5S RNA into the large ribosomal subunit, where it forms part of the central protuberance. This chain is Large ribosomal subunit protein uL18, found in Chlorobaculum parvum (strain DSM 263 / NCIMB 8327) (Chlorobium vibrioforme subsp. thiosulfatophilum).